Reading from the N-terminus, the 802-residue chain is ATP-dependent RNA helicase dbp4 (802 aa).

Positions 1-24 (MAPINGSRNGKHSKPQRGGNLKRK) are disordered. Basic residues predominate over residues 9–24 (NGKHSKPQRGGNLKRK). The short motif at 47–75 (EQFTDLPLSEPTASGLASSHYKTLTDIQS) is the Q motif element. One can recognise a Helicase ATP-binding domain in the interval 78 to 252 (ISHALKGRDI…RLSLQDPEYV (175 aa)). Residue 91–98 (AKTGSGKT) participates in ATP binding. The DEAD box signature appears at 200–203 (DEAD). Residues 274–437 (PLPQKLDVLW…SIKDQLQNMC (164 aa)) form the Helicase C-terminal domain. Disordered regions lie at residues 494–538 (GDDT…KYDR), 589–614 (DKDL…KGAK), and 685–802 (LAEE…GLLG). Over residues 520–538 (GEKKKTKKDETQVRTKYDR) the composition is skewed to basic and acidic residues. Basic and acidic residues predominate over residues 685–704 (LAEEAERTRQADLEDKEVAK). Basic residues predominate over residues 705-714 (QKKREKKEKR).

It belongs to the DEAD box helicase family. DDX10/DBP4 subfamily. As to quaternary structure, interacts with the U3 and U14 snoRNAs. Associates with pre-ribosomal complexes.

The protein resides in the nucleus. It localises to the nucleolus. The enzyme catalyses ATP + H2O = ADP + phosphate + H(+). ATP-dependent RNA helicase required for ribosome biogenesis. Involved in the release of U14 snoRNA in pre-ribosomal complexes. Required for pre-rRNA cleavage at site A2. The sequence is that of ATP-dependent RNA helicase dbp4 (dbp4) from Aspergillus niger (strain ATCC MYA-4892 / CBS 513.88 / FGSC A1513).